Reading from the N-terminus, the 614-residue chain is UvrABC system protein C (614 aa).

A GIY-YIG domain is found at 26 to 104; the sequence is NLPGVYKMLG…IKEYRPPYNV (79 aa). The 36-residue stretch at 215-250 folds into the UVR domain; it reads SDIHTALIEKMEASAEELDFEKAVFYRDQLSMLREV.

Belongs to the UvrC family. Interacts with UvrB in an incision complex.

Its subcellular location is the cytoplasm. The UvrABC repair system catalyzes the recognition and processing of DNA lesions. UvrC both incises the 5' and 3' sides of the lesion. The N-terminal half is responsible for the 3' incision and the C-terminal half is responsible for the 5' incision. In Psychrobacter cryohalolentis (strain ATCC BAA-1226 / DSM 17306 / VKM B-2378 / K5), this protein is UvrABC system protein C.